The sequence spans 179 residues: Inner membrane-spanning protein YciB (179 aa).

5 helical membrane passes run 22 to 42 (IYAA…YSWV), 50 to 70 (MALI…FFHN), 76 to 96 (WKVT…QWVM), 121 to 141 (LAWA…AFWL), and 149 to 169 (FKVF…GIYI).

The protein belongs to the YciB family.

It is found in the cell inner membrane. Plays a role in cell envelope biogenesis, maintenance of cell envelope integrity and membrane homeostasis. The chain is Inner membrane-spanning protein YciB from Klebsiella pneumoniae subsp. pneumoniae (strain ATCC 700721 / MGH 78578).